The primary structure comprises 338 residues: MKFIDEVTLFASSGHGGAGCVAFRREKFIEFGGPNGGDGGKGGDVVFVAKAGLSSLLELRHRPHQKAEKGHNGQGKNRHGASGADLVIKVPVGTVISDAESGEQLADLAENGQRVVLLKGGRGGQGNARFASATHKTPRFAQPGEEGQEAKLRLELKLMADVGLLGLPNAGKSSLITKISAARPKIADYPFTTIKPSLGVVPYKNARSFVMADIPGIIEGAHEGAGLGHRFLKHLERSGILLHLVDISWMPERDPLAEYEAVTRELTMFSPELAAKEQVVVITKLDLPQTREKLAEIRSWFEERGIRVFPISSATGEGVGELLDEIARRLWGRIEEEW.

The region spanning 1 to 159 is the Obg domain; the sequence is MKFIDEVTLF…AKLRLELKLM (159 aa). The 172-residue stretch at 160-331 folds into the OBG-type G domain; that stretch reads ADVGLLGLPN…LLDEIARRLW (172 aa). GTP-binding positions include 166 to 173, 191 to 195, 213 to 216, 283 to 286, and 312 to 314; these read GLPNAGKS, FTTIK, DIPG, TKLD, and SSA. Positions 173 and 193 each coordinate Mg(2+).

This sequence belongs to the TRAFAC class OBG-HflX-like GTPase superfamily. OBG GTPase family. Monomer. It depends on Mg(2+) as a cofactor.

The protein resides in the cytoplasm. In terms of biological role, an essential GTPase which binds GTP, GDP and possibly (p)ppGpp with moderate affinity, with high nucleotide exchange rates and a fairly low GTP hydrolysis rate. Plays a role in control of the cell cycle, stress response, ribosome biogenesis and in those bacteria that undergo differentiation, in morphogenesis control. In Pelobacter propionicus (strain DSM 2379 / NBRC 103807 / OttBd1), this protein is GTPase Obg.